Consider the following 185-residue polypeptide: Thymidine kinase (185 aa).

ATP-binding positions include 7 to 14 (GPMFAGKT) and 83 to 86 (DEIQ). E84 (proton acceptor) is an active-site residue. Zn(2+) is bound by residues C139, C142, C177, and H180.

It belongs to the thymidine kinase family. As to quaternary structure, homotetramer.

It is found in the cytoplasm. The enzyme catalyses thymidine + ATP = dTMP + ADP + H(+). The protein is Thymidine kinase of Pyrobaculum aerophilum (strain ATCC 51768 / DSM 7523 / JCM 9630 / CIP 104966 / NBRC 100827 / IM2).